The sequence spans 354 residues: Glutamine synthetase (354 aa).

In terms of domain architecture, GS beta-grasp spans 22–101 (IQAEYVWIDG…VLAETYNNDG (80 aa)). The GS catalytic domain maps to 108 to 354 (HRHHAKKVFD…IIAETTILDK (247 aa)).

The protein belongs to the glutamine synthetase family. Homooctamer.

Its subcellular location is the cytoplasm. The catalysed reaction is L-glutamate + NH4(+) + ATP = L-glutamine + ADP + phosphate + H(+). The polypeptide is Glutamine synthetase (glnA) (Agaricus bisporus (White button mushroom)).